The following is a 155-amino-acid chain: Small ribosomal subunit protein uS7c (155 aa).

This sequence belongs to the universal ribosomal protein uS7 family. In terms of assembly, part of the 30S ribosomal subunit.

The protein localises to the plastid. The protein resides in the chloroplast. One of the primary rRNA binding proteins, it binds directly to 16S rRNA where it nucleates assembly of the head domain of the 30S subunit. This Spirogyra maxima (Green alga) protein is Small ribosomal subunit protein uS7c (rps7).